A 65-amino-acid chain; its full sequence is MKLKTKSSVKKRFNLTAKGKVISAQSGKRHGMVKRSKSNIRNQRGTTVLGKSDSRIVKLYIPYGI.

The protein belongs to the bacterial ribosomal protein bL35 family.

The sequence is that of Large ribosomal subunit protein bL35 from Wolbachia sp. subsp. Brugia malayi (strain TRS).